The primary structure comprises 218 residues: Adenylate kinase (218 aa).

10-15 contacts ATP; sequence GAGKGT. The NMP stretch occupies residues 30–59; it reads STGDMLRAAVKAGTPLGIEAKKVMDAGGLV. AMP-binding positions include Thr31, Arg36, 57–59, 85–88, and Gln92; these read GLV and GFPR. An LID region spans residues 122-159; it reads GRRSHAASGRTYHVKFNPPKVAGVDDVTGEPLIQRDDD. ATP is bound by residues Arg123 and 132-133; that span reads TY. AMP-binding residues include Arg156 and Arg167. Residue Gly203 participates in ATP binding.

Belongs to the adenylate kinase family. As to quaternary structure, monomer.

It is found in the cytoplasm. It catalyses the reaction AMP + ATP = 2 ADP. It functions in the pathway purine metabolism; AMP biosynthesis via salvage pathway; AMP from ADP: step 1/1. In terms of biological role, catalyzes the reversible transfer of the terminal phosphate group between ATP and AMP. Plays an important role in cellular energy homeostasis and in adenine nucleotide metabolism. This Albidiferax ferrireducens (strain ATCC BAA-621 / DSM 15236 / T118) (Rhodoferax ferrireducens) protein is Adenylate kinase.